Consider the following 764-residue polypeptide: Cyclin-F (764 aa).

The Nuclear localization signal 1 motif lies at 19-27; it reads RKRVRKRAS. Residues 28-75 enclose the F-box domain; the sequence is AVSLLSLPEELLVFVLQCLSAEDLLSVRAVHSHLCDIIDTNASIWARV. The Cyclin N-terminal domain occupies 307–404; sequence TKRYILVDWL…EVISVLDGKI (98 aa). Positions 309–312 match the D box 1 motif; it reads RYIL. Residues 570 to 575 carry the Nuclear localization signal 2 motif; that stretch reads SSKRRR. The interval 583–738 is PEST; that stretch reads RGAFVATPTA…PSQRIRRQVK (156 aa). Residues 662 to 754 are disordered; that stretch reads CEEDEQEPPT…HSAGEAEQED (93 aa). Over residues 682-692 the composition is skewed to low complexity; sequence SSSSTSSSSSS. The span at 702–722 shows a compositional bias: polar residues; that stretch reads SGYSSIQSFPSPTGSSALVSP. Residues 732–742 are compositionally biased toward basic residues; that stretch reads RIRRQVKRKNT.

This sequence belongs to the cyclin family. Cyclin AB subfamily. Component of the SCF(CCNF) complex. As to expression, expressed in the brain.

The protein localises to the nucleus. It is found in the cytoplasm. The protein resides in the perinuclear region. It localises to the cytoskeleton. Its subcellular location is the microtubule organizing center. The protein localises to the centrosome. It is found in the centriole. In terms of biological role, substrate recognition component of a SCF (SKP1-CUL1-F-box protein) E3 ubiquitin-protein ligase complex which mediates the ubiquitination and subsequent proteasomal degradation of target proteins. The SCF(CCNF) E3 ubiquitin-protein ligase complex is an integral component of the ubiquitin proteasome system (UPS) and links proteasome degradation to the cell cycle. Mediates the substrate recognition and the proteasomal degradation of various target proteins during G2 phase involved in the regulation of cell cycle progression and in the maintenance of genome stability. May play a role in motor neuron development and axonal outgrowth. In Danio rerio (Zebrafish), this protein is Cyclin-F (ccnf).